Here is a 254-residue protein sequence, read N- to C-terminus: Phosphoribosylaminoimidazole-succinocarboxamide synthase (254 aa).

It belongs to the SAICAR synthetase family.

It carries out the reaction 5-amino-1-(5-phospho-D-ribosyl)imidazole-4-carboxylate + L-aspartate + ATP = (2S)-2-[5-amino-1-(5-phospho-beta-D-ribosyl)imidazole-4-carboxamido]succinate + ADP + phosphate + 2 H(+). The protein operates within purine metabolism; IMP biosynthesis via de novo pathway; 5-amino-1-(5-phospho-D-ribosyl)imidazole-4-carboxamide from 5-amino-1-(5-phospho-D-ribosyl)imidazole-4-carboxylate: step 1/2. This chain is Phosphoribosylaminoimidazole-succinocarboxamide synthase, found in Brucella abortus (strain S19).